The chain runs to 316 residues: Ribosomal RNA small subunit methyltransferase H (316 aa).

S-adenosyl-L-methionine is bound by residues 35-37 (AGH), Asp-55, Phe-84, Asp-105, and Gln-112.

The protein belongs to the methyltransferase superfamily. RsmH family.

Its subcellular location is the cytoplasm. The catalysed reaction is cytidine(1402) in 16S rRNA + S-adenosyl-L-methionine = N(4)-methylcytidine(1402) in 16S rRNA + S-adenosyl-L-homocysteine + H(+). Functionally, specifically methylates the N4 position of cytidine in position 1402 (C1402) of 16S rRNA. The chain is Ribosomal RNA small subunit methyltransferase H from Streptococcus gordonii (strain Challis / ATCC 35105 / BCRC 15272 / CH1 / DL1 / V288).